The primary structure comprises 140 residues: Small ribosomal subunit protein uS8c (140 aa).

This sequence belongs to the universal ribosomal protein uS8 family. As to quaternary structure, part of the 30S ribosomal subunit.

The protein resides in the plastid. It localises to the chloroplast. Its function is as follows. One of the primary rRNA binding proteins, it binds directly to 16S rRNA central domain where it helps coordinate assembly of the platform of the 30S subunit. The protein is Small ribosomal subunit protein uS8c (rps8) of Euglena gracilis.